The chain runs to 212 residues: Stringent starvation protein A homolog (212 aa).

A GST N-terminal domain is found at 9 to 87 (SVMTLFSNKD…YLDERFPHPP (79 aa)). The GST C-terminal domain maps to 92 to 212 (YPVSRAKDRL…AAPKNLMDDK (121 aa)).

It belongs to the GST superfamily. HSP26 family.

Forms an equimolar complex with the RNA polymerase holoenzyme (RNAP) but not with the core enzyme. The polypeptide is Stringent starvation protein A homolog (sspA) (Haemophilus influenzae (strain ATCC 51907 / DSM 11121 / KW20 / Rd)).